We begin with the raw amino-acid sequence, 380 residues long: cAMP-dependent protein kinase type I-alpha regulatory subunit (380 aa).

Met1 is subject to N-acetylmethionine. At Ala2 the chain carries N-acetylalanine; in cAMP-dependent protein kinase type I-alpha regulatory subunit, N-terminally processed. Positions 2–135 are dimerization and phosphorylation; the sequence is ASGSTASEEE…ALAKAIEKNV (134 aa). A phosphoserine mark is found at Ser3, Ser76, and Ser82. Residues 64-96 form a disordered region; the sequence is IQNLQKASARADSREDEISPPPPNPVVKGRRRR. The Pseudophosphorylation motif signature appears at 95 to 99; that stretch reads RRGAI. Ser100 bears the Phosphoserine mark. 3',5'-cyclic AMP is bound by residues 136–253, Glu201, Arg210, 254–380, Glu325, and Arg334; these read LFSH…SKVS and ILES…SLSV. Residue Ser257 is modified to Phosphoserine.

The protein belongs to the cAMP-dependent kinase regulatory chain family. The inactive holoenzyme is composed of two regulatory chains and two catalytic chains. Activation by cAMP releases the two active catalytic monomers and the regulatory dimer. Interacts with PRKACA and PRKACB. PRKAR1A also interacts with RFC2; the complex may be involved in cell survival. Interacts with AKAP4. Interacts with RARA; the interaction occurs in the presence of cAMP or FSH and regulates RARA transcriptional activity. Interacts with the phosphorylated form of PJA2. Interacts with CBFA2T3. Interacts with PRKX; regulates this cAMP-dependent protein kinase. Interacts with smAKAP; this interaction may target PRKAR1A to the plasma membrane. Interacts with AICDA. In terms of processing, the pseudophosphorylation site binds to the substrate-binding region of the catalytic chain, resulting in the inhibition of its activity. In terms of tissue distribution, four types of regulatory chains are found: I-alpha, I-beta, II-alpha, and II-beta. Their expression varies among tissues and is in some cases constitutive and in others inducible.

It localises to the cell membrane. Regulatory subunit of the cAMP-dependent protein kinases involved in cAMP signaling in cells. This chain is cAMP-dependent protein kinase type I-alpha regulatory subunit (PRKAR1A), found in Sus scrofa (Pig).